The primary structure comprises 405 residues: GTPase Obg (405 aa).

The Obg domain occupies 1 to 159; sequence MRFIDEAVVT…KVLKFELKVV (159 aa). Residues 160–333 form the OBG-type G domain; the sequence is ADVGLIGLPN…IKYHLMNEIE (174 aa). Residues 166–173, 191–195, 213–216, 283–286, and 314–316 contribute to the GTP site; these read GLPNAGKS, FTTLV, DIPG, NKID, and ATL. The Mg(2+) site is built by S173 and T193. A compositionally biased stretch (basic and acidic residues) spans 371 to 382; it reads YRAARKAAREGT. The disordered stretch occupies residues 371 to 405; it reads YRAARKAAREGTDLSDDDFDDSDDDDDGVEVVYAP. The span at 383–399 shows a compositional bias: acidic residues; it reads DLSDDDFDDSDDDDDGV.

Belongs to the TRAFAC class OBG-HflX-like GTPase superfamily. OBG GTPase family. As to quaternary structure, monomer. Mg(2+) is required as a cofactor.

It localises to the cytoplasm. Functionally, an essential GTPase which binds GTP, GDP and possibly (p)ppGpp with moderate affinity, with high nucleotide exchange rates and a fairly low GTP hydrolysis rate. Plays a role in control of the cell cycle, stress response, ribosome biogenesis and in those bacteria that undergo differentiation, in morphogenesis control. In Psychrobacter cryohalolentis (strain ATCC BAA-1226 / DSM 17306 / VKM B-2378 / K5), this protein is GTPase Obg.